Consider the following 923-residue polypeptide: Alanine--tRNA ligase (923 aa).

4 residues coordinate Zn(2+): His611, His615, Cys714, and His718. Residues 886–903 (VGGGGGGRPNMARGGGTD) are compositionally biased toward gly residues. Residues 886 to 909 (VGGGGGGRPNMARGGGTDPSGMDN) form a disordered region.

It belongs to the class-II aminoacyl-tRNA synthetase family. The cofactor is Zn(2+).

It is found in the cytoplasm. The enzyme catalyses tRNA(Ala) + L-alanine + ATP = L-alanyl-tRNA(Ala) + AMP + diphosphate. In terms of biological role, catalyzes the attachment of alanine to tRNA(Ala) in a two-step reaction: alanine is first activated by ATP to form Ala-AMP and then transferred to the acceptor end of tRNA(Ala). Also edits incorrectly charged Ser-tRNA(Ala) and Gly-tRNA(Ala) via its editing domain. In Methanococcoides burtonii (strain DSM 6242 / NBRC 107633 / OCM 468 / ACE-M), this protein is Alanine--tRNA ligase.